The sequence spans 231 residues: CLAVATA3/ESR (CLE)-related protein 4B-1 (231 aa).

The signal sequence occupies residues Met1 to Ala21. Residues Ala21 to Met83 are required for secretion from the host cytoplasm to the host apoplasm. N-linked (GlcNAc...) asparagine glycosylation is present at Asn32. The interval Arg116 to His231 is disordered. 2 stretches are compositionally biased toward basic and acidic residues: residues His125 to Val137 and Pro144 to Gly221. The A-1 repeat unit spans residues Glu127–Lys135. The 5 X approximate repeat A stretch occupies residues Glu127–Lys219. The CLE-1 repeat unit spans residues Arg136–His147. Positions Arg136 to His231 are 5 X approximate repeat CLE. One copy of the A-2 repeat lies at Gln148 to Lys156. The CLE-2 repeat unit spans residues Arg157–His168. The stretch at Glu169 to Lys177 is one A-3 repeat. The CLE-3 repeat unit spans residues Arg178–His189. One copy of the A-4 repeat lies at Glu190–Lys198. The stretch at Arg199–His210 is one CLE-4 repeat. The stretch at Glu211–Lys219 is one A-5 repeat. The CLE-5 repeat unit spans residues Arg220 to His231.

This sequence belongs to the CLV3/ESR signal peptide family. Highly expressed exclusively within the dorsal esophageal gland cell during syncytium formation in host plants.

It is found in the secreted. It localises to the host cytoplasm. The protein resides in the host extracellular space. The protein localises to the extracellular space. Its subcellular location is the apoplast. Functionally, mimics host plant CLE extracellular signal peptides that regulate cell fate. May play a role in the differentiation or division of feeding cells (syncytia) induced in plant roots during infection. The protein is CLAVATA3/ESR (CLE)-related protein 4B-1 (CLE-4B-1) of Globodera rostochiensis (Golden nematode worm).